The following is a 1060-amino-acid chain: Carbamoyl phosphate synthase large chain (1060 aa).

Residues 1–401 (MPKRQDIHKI…SLLKAVRSLE (401 aa)) are carboxyphosphate synthetic domain. ATP-binding residues include Arg129, Arg169, Gly175, Gly176, Arg208, Ile210, Glu215, Gly241, Val242, His243, Gln284, and Glu298. The region spanning 133-327 (KNLMQKLHEP…IAKMAAKIAV (195 aa)) is the ATP-grasp 1 domain. Mg(2+) is bound by residues Gln284, Glu298, and Asn300. 3 residues coordinate Mn(2+): Gln284, Glu298, and Asn300. An oligomerization domain region spans residues 402–546 (VGLIHPERPA…YSTYESSTES (145 aa)). The segment at 547–929 (VKSDKPSVLV…ALYKAFEAAG (383 aa)) is carbamoyl phosphate synthetic domain. An ATP-grasp 2 domain is found at 671-861 (DQVIKSLKLP…LAQVATLAIL (191 aa)). ATP contacts are provided by Arg707, His746, Leu748, Glu752, Gly777, Ile778, His779, Ser780, Gln820, and Glu832. Mg(2+) is bound by residues Gln820, Glu832, and Asn834. Residues Gln820, Glu832, and Asn834 each contribute to the Mn(2+) site. An MGS-like domain is found at 930-1060 (MHLPQFGRAL…QAFSISPIKS (131 aa)). Positions 930-1060 (MHLPQFGRAL…QAFSISPIKS (131 aa)) are allosteric domain.

It belongs to the CarB family. In terms of assembly, composed of two chains; the small (or glutamine) chain promotes the hydrolysis of glutamine to ammonia, which is used by the large (or ammonia) chain to synthesize carbamoyl phosphate. Tetramer of heterodimers (alpha,beta)4. The cofactor is Mg(2+). It depends on Mn(2+) as a cofactor.

It carries out the reaction hydrogencarbonate + L-glutamine + 2 ATP + H2O = carbamoyl phosphate + L-glutamate + 2 ADP + phosphate + 2 H(+). The catalysed reaction is hydrogencarbonate + NH4(+) + 2 ATP = carbamoyl phosphate + 2 ADP + phosphate + 2 H(+). It participates in amino-acid biosynthesis; L-arginine biosynthesis; carbamoyl phosphate from bicarbonate: step 1/1. The protein operates within pyrimidine metabolism; UMP biosynthesis via de novo pathway; (S)-dihydroorotate from bicarbonate: step 1/3. Its function is as follows. Large subunit of the glutamine-dependent carbamoyl phosphate synthetase (CPSase). CPSase catalyzes the formation of carbamoyl phosphate from the ammonia moiety of glutamine, carbonate, and phosphate donated by ATP, constituting the first step of 2 biosynthetic pathways, one leading to arginine and/or urea and the other to pyrimidine nucleotides. The large subunit (synthetase) binds the substrates ammonia (free or transferred from glutamine from the small subunit), hydrogencarbonate and ATP and carries out an ATP-coupled ligase reaction, activating hydrogencarbonate by forming carboxy phosphate which reacts with ammonia to form carbamoyl phosphate. In Lacticaseibacillus paracasei (strain ATCC 334 / BCRC 17002 / CCUG 31169 / CIP 107868 / KCTC 3260 / NRRL B-441) (Lactobacillus paracasei), this protein is Carbamoyl phosphate synthase large chain.